The primary structure comprises 129 residues: Lysozyme C-2 (129 aa).

The C-type lysozyme domain occupies 1 to 129 (KVFERCELAR…VSSYVEGCTL (129 aa)). Disulfide bonds link C6-C127, C30-C115, C65-C81, and C77-C95. Catalysis depends on residues E35 and D53.

It belongs to the glycosyl hydrolase 22 family. As to quaternary structure, monomer.

It catalyses the reaction Hydrolysis of (1-&gt;4)-beta-linkages between N-acetylmuramic acid and N-acetyl-D-glucosamine residues in a peptidoglycan and between N-acetyl-D-glucosamine residues in chitodextrins.. Lysozymes have primarily a bacteriolytic function; those in tissues and body fluids are associated with the monocyte-macrophage system and enhance the activity of immunoagents. This is Lysozyme C-2 from Capra hircus (Goat).